The primary structure comprises 259 residues: Major cell-binding factor (259 aa).

The first 26 residues, 1-26, serve as a signal peptide directing secretion; the sequence is MVFRKSLLKLAVFALGACVAFSNANA.

The protein belongs to the bacterial solute-binding protein 3 family.

It localises to the cell surface. Common antigen and a major cell adherence molecule. Most probably involved, with PEB1C, in a binding-protein-dependent transport system for an amino acid. May be involved in binding to intestinal cells. This Campylobacter jejuni subsp. jejuni serotype O:23/36 (strain 81-176) protein is Major cell-binding factor (peb1A).